The primary structure comprises 130 residues: Small ribosomal subunit protein uS9 (130 aa).

Belongs to the universal ribosomal protein uS9 family.

The sequence is that of Small ribosomal subunit protein uS9 from Teredinibacter turnerae (strain ATCC 39867 / T7901).